Here is a 203-residue protein sequence, read N- to C-terminus: Peptidyl-prolyl cis-trans isomerase FKBP11 (203 aa).

A signal peptide spans 1–29 (MTLRPSLLPLRLLLLLLLLLRGAVCQAEA). The 88-residue stretch at 59-146 (GDTLHIHYSG…HFDVELIALI (88 aa)) folds into the PPIase FKBP-type domain. The helical transmembrane segment at 158–178 (ILPLVGMAMVPALLGLIGYHL) threads the bilayer.

Belongs to the FKBP-type PPIase family. Interacts with IFITM5.

It localises to the membrane. It carries out the reaction [protein]-peptidylproline (omega=180) = [protein]-peptidylproline (omega=0). Its function is as follows. PPIases accelerate the folding of proteins during protein synthesis. The polypeptide is Peptidyl-prolyl cis-trans isomerase FKBP11 (FKBP11) (Bos taurus (Bovine)).